The primary structure comprises 439 residues: GTPase Obg (439 aa).

In terms of domain architecture, Obg spans 3–162 (GEFYDSARIF…REIELELKLL (160 aa)). In terms of domain architecture, OBG-type G spans 163–333 (ADVGLIGFPN…LLQRVAERLR (171 aa)). Residues 169–176 (GFPNAGKS), 194–198 (FTTLQ), 215–218 (DIPG), 285–288 (NKAD), and 314–316 (SAA) contribute to the GTP site. Residues Ser-176 and Thr-196 each contribute to the Mg(2+) site. The 78-residue stretch at 351–428 (VPEVDERLYT…IEQAAFDWED (78 aa)) folds into the OCT domain.

The protein belongs to the TRAFAC class OBG-HflX-like GTPase superfamily. OBG GTPase family. Monomer. Mg(2+) is required as a cofactor.

The protein resides in the cytoplasm. An essential GTPase which binds GTP, GDP and possibly (p)ppGpp with moderate affinity, with high nucleotide exchange rates and a fairly low GTP hydrolysis rate. Plays a role in control of the cell cycle, stress response, ribosome biogenesis and in those bacteria that undergo differentiation, in morphogenesis control. The sequence is that of GTPase Obg from Roseiflexus castenholzii (strain DSM 13941 / HLO8).